The chain runs to 256 residues: Aspirochlorine biosynthesis protein F (256 aa).

Asn19 carries an N-linked (GlcNAc...) asparagine glycan. Helical transmembrane passes span 21-41 (SITP…GPHF), 163-183 (LVWV…FFFT), and 214-234 (FGLG…ILAV).

It localises to the membrane. It participates in mycotoxin biosynthesis. Its function is as follows. Part of the gene cluster that mediates the biosynthesis of aspirochlorine (or antibiotic A30641), an unusual halogenated spiro compound with distinctive antifungal properties due to selective inhibition of protein biosynthesis, and which is also active against bacteria, viruses, and murine tumor cells. The non-ribosomal peptide synthetase (NRPS) aclP is responsible the formation of the diketopiperazine (DKP) core from the condensation of 2 phenylalanine residues. One Phe residue is tailored into chlorotyrosine by hydroxylation and chlorination, whereas the second Phe undergoes an unprecedented C-C bond cleavage to be converted into glycine. After formation of the DKP, sulfur is incorporated into the DKP by conjugation with glutathione by aclG, followed by its stepwise degradation to the thiol by aclI, aclJ and aclK, and the dithiol oxidation by aclT. In addition, oxygenases (aclB, aclC, aclL and aclO) and O-methyltransferases (aclM and aclU) act as tailoring enzymes to produce the intermediate dechloroaspirochlorine. Ultimately, chlorination of dechloroaspirochlorine by the halogenase aclH is the last step in the aspirochlorine pathway. This chain is Aspirochlorine biosynthesis protein F, found in Aspergillus oryzae (strain ATCC 42149 / RIB 40) (Yellow koji mold).